Here is a 271-residue protein sequence, read N- to C-terminus: uncharacterized protein (271 aa).

This is an uncharacterized protein from Mycobacterium tuberculosis (strain CDC 1551 / Oshkosh).